A 1390-amino-acid chain; its full sequence is ATPase family AAA domain-containing protein 2 (1390 aa).

The interval 40–63 is disordered; it reads RSAGAAQKKPAATTAKAGDGSSVK. Low complexity predominate over residues 42–57; it reads AGAAQKKPAATTAKAG. A phosphoserine mark is found at S60 and S61. Residue K125 forms a Glycyl lysine isopeptide (Lys-Gly) (interchain with G-Cter in SUMO2) linkage. A phosphoserine mark is found at S165 and S170. Positions 216-380 are disordered; it reads LNMYTRGKQK…HFERRRKRSR (165 aa). Over residues 223 to 232 the composition is skewed to basic and acidic residues; sequence KQKDIQRTDE. Over residues 244–288 the composition is skewed to acidic residues; sequence SSEEGEDQEHEDDGEDEDDEDDDDDDDDDDDDDDEDDEDEEDGEE. K317 is covalently cross-linked (Glycyl lysine isopeptide (Lys-Gly) (interchain with G-Cter in SUMO2)). S327, S337, S342, and S410 each carry phosphoserine. Position 467–474 (467–474) interacts with ATP; it reads GPPGTGKT. S746 and S751 each carry phosphoserine. Coiled coils occupy residues 970–994 and 1086–1112; these read LTAEEVKRLEEQEEDTFRELRIFLR and YAIIKEELDEDFEQLCEEIQESRKKRG. The region spanning 980–1092 is the Bromo domain; the sequence is EQEEDTFREL…DTAYAIIKEE (113 aa). The tract at residues 1124–1163 is disordered; the sequence is HVMPKQNSTLVGDKRSDPEQNEKLKTPSTPVACSTPAQLK. Residue K1128 forms a Glycyl lysine isopeptide (Lys-Gly) (interchain with G-Cter in SUMO2) linkage. The span at 1135 to 1148 shows a compositional bias: basic and acidic residues; it reads GDKRSDPEQNEKLK. S1139 carries the post-translational modification Phosphoserine. Residue K1148 forms a Glycyl lysine isopeptide (Lys-Gly) (interchain with G-Cter in SUMO2) linkage. T1149, T1152, and T1176 each carry phosphothreonine. Residues 1149 to 1160 are compositionally biased toward polar residues; that stretch reads TPSTPVACSTPA. Residues 1181 to 1242 form a disordered region; the sequence is RKISQAKDDS…SESKLELRNN (62 aa). The segment covering 1185 to 1200 has biased composition (basic and acidic residues); the sequence is QAKDDSQNAIDHKIES. Residues S1200, S1233, and S1235 each carry the phosphoserine modification. A compositionally biased stretch (polar residues) spans 1229-1242; the sequence is QQNASESKLELRNN. K1236 participates in a covalent cross-link: Glycyl lysine isopeptide (Lys-Gly) (interchain with G-Cter in SUMO2). Phosphoserine occurs at positions 1243 and 1302. Position 1323 is a phosphothreonine (T1323).

It belongs to the AAA ATPase family. As to quaternary structure, interacts with ESR1 and NCOA3 and these interactions are enhanced by estradiol. Interacts with acetylated lysine residues on histone H1.4, H2A, H2B and H3 (in vitro). As to expression, highly expressed in estrogen receptor positive breast tumors and in osteosarcoma tumors.

It is found in the nucleus. It carries out the reaction ATP + H2O = ADP + phosphate + H(+). May be a transcriptional coactivator of the nuclear receptor ESR1 required to induce the expression of a subset of estradiol target genes, such as CCND1, MYC and E2F1. May play a role in the recruitment or occupancy of CREBBP at some ESR1 target gene promoters. May be required for histone hyperacetylation. Involved in the estrogen-induced cell proliferation and cell cycle progression of breast cancer cells. This is ATPase family AAA domain-containing protein 2 (ATAD2) from Homo sapiens (Human).